We begin with the raw amino-acid sequence, 616 residues long: Angiotensin-converting enzyme (616 aa).

Residues 1–23 (MNLINFSYLNLLFGAGLFSVLES) form the signal peptide. The Peptidase M2 domain occupies 27–610 (LNTESDAKKW…PRAENWMGGK (584 aa)). Residues asparagine 61 and asparagine 96 are each glycosylated (N-linked (GlcNAc...) asparagine). Cysteine 142 and cysteine 152 are oxidised to a cystine. Residues arginine 180 and tyrosine 218 each contribute to the chloride site. N-linked (GlcNAc...) asparagine glycosylation occurs at asparagine 303. Residues cysteine 345 and cysteine 363 are joined by a disulfide bond. Residue histidine 376 coordinates Zn(2+). Glutamate 377 functions as the Proton acceptor in the catalytic mechanism. Histidine 380 and glutamate 404 together coordinate Zn(2+). N-linked (GlcNAc...) asparagine glycosylation is present at asparagine 428. The chloride site is built by tryptophan 478 and arginine 482. The active-site Proton donor is histidine 506. Arginine 515 is a chloride binding site. A disulfide bridge links cysteine 531 with cysteine 543. 2 N-linked (GlcNAc...) asparagine glycosylation sites follow: asparagine 535 and asparagine 573.

This sequence belongs to the peptidase M2 family. Zn(2+) serves as cofactor. It depends on chloride as a cofactor. Epithelial cells of the midgut.

The protein localises to the secreted. Its subcellular location is the extracellular space. The enzyme catalyses Release of a C-terminal dipeptide, oligopeptide-|-Xaa-Yaa, when Xaa is not Pro, and Yaa is neither Asp nor Glu. Thus, conversion of angiotensin I to angiotensin II, with increase in vasoconstrictor activity, but no action on angiotensin II.. Its activity is regulated as follows. Activated by chloride. Inhibited by captopril and lisinopril, and to a lesser extent by delaprilat. The chain is Angiotensin-converting enzyme (ACE) from Theromyzon tessulatum (Duck leech).